The primary structure comprises 1749 residues: MQLKHLRTLLSPQDGAAKVTCMAWSQNNAKFAVCTVDRVVLLYDEHGERRDKFSTKPADMKYGRKSYMVKGMAFSPDSTKIAIGQTDNIIYVYKIGEDWGDKKVICNKFIQTSAVTCLQWPAEYVIVFGLAEGKVRLANTKTNKSSTIYGTESYVVALTTNCSGKGILSGHADGTIVRYFFDDEGSGESQGKLVNHPCPPYALAWATNSIVAAGCDRRIVAYGKEGHVLQTFDYSRDPQEREFTTAAASPGGQSVVLGSYDRLRVFNWSPRRSIWEEAKPKEIANLYTVTALAWKRDGSRLCAGTLCGGVEQFDCCLRRSIYKNKFELTYVGPSQVIVKNLSSGTRVVLKSHYGYEVEEVKILGKERYLVAHTSDTLLLGDLNTNRLSEIAWQGSGGNEKYFFENENVCMIFNAGELTLVEYGSNDSLGSVRTEFMNPHLISVRINERCQRGMEDNKKLAYLVDIKTIAIVDLIGGYNIGTISHESRVDWLELNETGHKLLFRDRKLRLHLYDIESCSKTMILNFCSYVQWVPGSDVLVAQNRNSLCVWYNIEAPERVTMSSIRGDVVGLERGGGKTEVMVTEGVTTVAYTLDEGLIEFGTAIDDGNYTRATAFLETLEMTPETEAMWKTLSKLALEARQLHTAERCFSALGHVAKARFLHETNEIADQVSREYGGEGTDFYQVRARLAMLEKNYKLAEMIFLEQNAVEEAMDMYQELHRWEECIAVAEAKGHPALEKLRRDYYQWLMDTQQEERAGELQESQGDGLAAISLYLKAGLPAKAARLVLTREELLANTELVEHITTALIKGELYERAGDLFEKIRNPQRALECYCKGNAFMKAVELARLAFPVEVVRLEEAWGDHLVQQKQLDAAINHYIEARCSIKAIEAALGARQWKKAIYILDLQDRNTASKYYPRVAQHYASLQEYEIAEELYTKGDRTKDAIDMYTQAGRWEQAHKLAMKCMRPEDVSVLYITQAQEMEKQGKYREAERLYVTVEEPDLAITMFKKHKLYDDMIRLVGKHHPDLLSDTHLHLGKELEAEGRLQEAEYHYLEAQEWKATVNMYRSSGLWEEAYRVAKAHGGANAHKHVAYLWAKSLGGEAAVRLLNKLGLLEATIDHAADNCSFEFAFELSRLAFKHKAPEIHLKYAMYLEDEGKFEEAEAEFIRAGKPKEAVLMFVHNQDWEAAQRVAEAHDPDSVAEVLVGQARGALEEKDFQKAEGLLLRAQRPGLALNYYKEAGLWSDALRICKDYVPGQLEALQEEYEREATKKGGRGVEGLVEQARQWEQAGEYSRAVDCYLKVRDSGSSGLMEKCWMKAAELSIKFLPPQRSLEVVRVVGPQLIGIGKHSAAAELYLNLDLVKEAIDAFIEGEEWNKAKRVAKELDPRYEDYVDQHYKEFLKNQGKVDSLVGVDVVAALDLYVEQGQWDKCIETATKQNYKILHKYVALYATHLIREGGYAQALALYVQHGAPANPQNFNIYKRIFTDMVSSPGTNNAEAYHSWADLRDVLFNLCENLVKSSEANSAAHEEFEMMLLISHYYATRSAAQSIKQLETVAARLSVSLLRHTQLLPADKAFYEAGTAAKEVGWENMAFIFLNRFLDLTDAIEEGTLDALDHSDFQDTDIPFEVPLPAKQHVPEAQREEVRDWVLTVSMDQRLEQVLPRDERGVYEASLVAASTGVRALPCLITGYPILRNKIEFKRPGKAANKDNWNKFLMAIKTSHSPVCQDVLKFISQWCGGLPSTSFSFQ.

Methionine 1 is modified (N-acetylmethionine). A Glycyl lysine isopeptide (Lys-Gly) (interchain with G-Cter in SUMO1) cross-link involves residue lysine 4. WD repeat units follow at residues 14 to 53 (DGAAKVTCMAWSQNNAKFAVCTVDRVVLLYDEHGERRDKF), 64 to 103 (RKSYMVKGMAFSPDSTKIAIGQTDNIIYVYKIGEDWGDKK), 110 to 148 (IQTSAVTCLQWPAEYVIVFGLAEGKVRLANTKTNKSSTI), 150 to 191 (GTES…ESQG), 195 to 233 (NHPCPPYALAWATNSIVAAGCDRRIVAYGKEGHVLQTFD), 238 to 278 (PQER…WEEA), 284 to 323 (ANLYTVTALAWKRDGSRLCAGTLCGGVEQFDCCLRRSIYK), 483 to 520 (SHESRVDWLELNETGHKLLFRDRKLRLHLYDIESCSKT), and 521 to 559 (MILNFCSYVQWVPGSDVLVAQNRNSLCVWYNIEAPERVT). One copy of the TPR 1 repeat lies at 593 to 624 (DEGLIEFGTAIDDGNYTRATAFLETLEMTPET). The residue at position 672 (arginine 672) is an Omega-N-methylarginine. TPR repeat units lie at residues 692–725 (EKNYKLAEMIFLEQNAVEEAMDMYQELHRWEECI), 809–842 (GELYERAGDLFEKIRNPQRALECYCKGNAFMKAV), 854–887 (VRLEEAWGDHLVQQKQLDAAINHYIEARCSIKAI), 912–945 (SKYYPRVAQHYASLQEYEIAEELYTKGDRTKDAI), 947–970 (MYTQAGRWEQAHKLAMKCMRPEDV), 971–1004 (SVLYITQAQEMEKQGKYREAERLYVTVEEPDLAI), 1042–1075 (EGRLQEAEYHYLEAQEWKATVNMYRSSGLWEEAY), 1142–1175 (PEIHLKYAMYLEDEGKFEEAEAEFIRAGKPKEAV), 1276–1309 (VEGLVEQARQWEQAGEYSRAVDCYLKVRDSGSSG), 1345–1378 (IGKHSAAAELYLNLDLVKEAIDAFIEGEEWNKAK), 1411–1445 (GVDVVAALDLYVEQGQWDKCIETATKQNYKILHKY), 1447–1477 (ALYATHLIREGGYAQALALYVQHGAPANPQN), and 1574–1607 (DKAFYEAGTAAKEVGWENMAFIFLNRFLDLTDAI).

This sequence belongs to the IFT172 family. Interacts with IFT88. Interacts with IFT57. Interacts with RABL2/RABL2A; binds preferentially to GDP-bound RABL2. In terms of tissue distribution, co-localizes with RABL2/RABL2A in the midpiece of elongated spermatids within the testis (at protein level). Expressed in the flagellum of elongated spermatids and sperm in the testis lumen (at protein level).

It localises to the cell projection. Its subcellular location is the cilium. Its function is as follows. Required for the maintenance and formation of cilia. Plays an indirect role in hedgehog (Hh) signaling, cilia being required for all activity of the hedgehog pathway. The chain is Intraflagellar transport protein 172 homolog (Ift172) from Mus musculus (Mouse).